Reading from the N-terminus, the 417-residue chain is Serine/threonine-protein phosphatase 4 regulatory subunit 2 (417 aa).

3 stretches are compositionally biased toward polar residues: residues 140–149, 158–170, and 186–196; these read EKNNSSSLNR, NSPSYTERSNING, and APMTTNGLPES. The segment at 140–417 is disordered; that stretch reads EKNNSSSLNR…EVTDEPMEQD (278 aa). A Phosphoserine modification is found at S159. Basic and acidic residues predominate over residues 197–213; that stretch reads TDSKEANLQQNEEKSHS. The span at 214–226 shows a compositional bias: low complexity; that stretch reads DSSTSESEVSSVS. Residue S226 is modified to Phosphoserine. The segment covering 231–258 has biased composition (basic and acidic residues); the sequence is KHPDEDAVEAEGHEVKRLRFDKEGEVRE. A compositionally biased stretch (polar residues) spans 259-269; sequence TASQTTSSEIS. Residues 283 to 297 are compositionally biased toward basic and acidic residues; sequence QDKDKDSRCTRQHCT. The segment covering 298 to 311 has biased composition (acidic residues); the sequence is EEDEEEDEEEEEES. A compositionally biased stretch (basic and acidic residues) spans 318-327; it reads MIPERKNQEK. Residues 338 to 350 are compositionally biased toward acidic residues; it reads ETSEENNQMEESD. The segment covering 353–363 has biased composition (basic and acidic residues); that stretch reads QAEKDLLHSEG. Residues 385 to 399 show a composition bias toward polar residues; that stretch reads GSNSSKTGEILSESS. A compositionally biased stretch (acidic residues) spans 400-417; it reads MENDDEATEVTDEPMEQD.

The protein belongs to the PPP4R2 family. In terms of assembly, serine/threonine-protein phosphatase 4 (PP4) occurs in different assemblies of the catalytic and one or more regulatory subunits. Component of the PP4 complexes PPP4C-PPP4R2, PPP4C-PPP4R2-PPP4R3A and PPP4C-PPP4R2-PPP4R3B. The PPP4C-PPP4R2 complex appears to be a tetramer composed of 2 molecules of PPP4C and 2 molecules of PPP4R2. Interacts with DDX20/GEMIN3 and GEMIN4. Interacts with RPA2; this DNA damage-dependent interaction recruits PPP4C leading to RPA2 dephosphorylation.

It localises to the cytoplasm. The protein localises to the cytoskeleton. It is found in the microtubule organizing center. The protein resides in the centrosome. Its subcellular location is the nucleus. Its function is as follows. Regulatory subunit of serine/threonine-protein phosphatase 4 (PP4). May regulate the activity of PPP4C at centrosomal microtubule organizing centers. Its interaction with the SMN complex leads to enhance the temporal localization of snRNPs, suggesting a role of PPP4C in maturation of spliceosomal snRNPs. The PPP4C-PPP4R2-PPP4R3A PP4 complex specifically dephosphorylates H2AX phosphorylated on 'Ser-140' (gamma-H2AX) generated during DNA replication and required for DNA double strand break repair. Mediates RPA2 dephosphorylation by recruiting PPP4C to RPA2 in a DNA damage-dependent manner. RPA2 dephosphorylation is required for the efficient RPA2-mediated recruitment of RAD51 to chromatin following double strand breaks, an essential step for DNA repair. The protein is Serine/threonine-protein phosphatase 4 regulatory subunit 2 (PPP4R2) of Pongo abelii (Sumatran orangutan).